We begin with the raw amino-acid sequence, 209 residues long: MGKCQVISHPLIQHKLSILRRQTTSTKDFRELVNEIAMLMGYEVSRDLPLEDVDIQTPVSKTVQKQLAGKKLAIVPILRAGIGMVDGLLSLVPAAKVGHIGMYRNEETLEPVEYLVKLPEDINQRQIFLVDPMLATGGSAILAVDSLKKRGAANIKFVCLVAAPEGVKKLQEAHPDIDIFTAALDDHLNDHGYIVPGLGDAGDRLFGPK.

Residues arginine 79, arginine 104, and 131 to 139 (DPMLATGGS) contribute to the 5-phospho-alpha-D-ribose 1-diphosphate site. Uracil-binding positions include isoleucine 194 and 199-201 (GDA). Position 200 (aspartate 200) interacts with 5-phospho-alpha-D-ribose 1-diphosphate.

The protein belongs to the UPRTase family. Requires Mg(2+) as cofactor.

It catalyses the reaction UMP + diphosphate = 5-phospho-alpha-D-ribose 1-diphosphate + uracil. The protein operates within pyrimidine metabolism; UMP biosynthesis via salvage pathway; UMP from uracil: step 1/1. With respect to regulation, allosterically activated by GTP. Catalyzes the conversion of uracil and 5-phospho-alpha-D-ribose 1-diphosphate (PRPP) to UMP and diphosphate. The sequence is that of Uracil phosphoribosyltransferase from Streptococcus pyogenes serotype M49 (strain NZ131).